Here is a 170-residue protein sequence, read N- to C-terminus: Photosystem I assembly protein Ycf3 (170 aa).

3 TPR repeats span residues 35-68 (AFTY…EVDA), 72-105 (SYIL…NPSL), and 120-153 (GEQA…APTN).

The protein belongs to the Ycf3 family.

The protein localises to the plastid. It is found in the chloroplast thylakoid membrane. In terms of biological role, essential for the assembly of the photosystem I (PSI) complex. May act as a chaperone-like factor to guide the assembly of the PSI subunits. The polypeptide is Photosystem I assembly protein Ycf3 (Tetradesmus obliquus (Green alga)).